The sequence spans 108 residues: Phosphoribosyl-ATP pyrophosphatase (108 aa).

The protein belongs to the PRA-PH family.

Its subcellular location is the cytoplasm. The enzyme catalyses 1-(5-phospho-beta-D-ribosyl)-ATP + H2O = 1-(5-phospho-beta-D-ribosyl)-5'-AMP + diphosphate + H(+). The protein operates within amino-acid biosynthesis; L-histidine biosynthesis; L-histidine from 5-phospho-alpha-D-ribose 1-diphosphate: step 2/9. This Geobacter sulfurreducens (strain ATCC 51573 / DSM 12127 / PCA) protein is Phosphoribosyl-ATP pyrophosphatase.